The primary structure comprises 365 residues: Probable protein kinase At2g41970 (365 aa).

A disordered region spans residues 1–50 (MFCCGGADEEPAGPPANQYAAPPNKAGNPNFGGGNRGEPRNPNAPRSGAP). One can recognise a Protein kinase domain in the interval 73-354 (FGNKALIGEG…IVVKALQPLL (282 aa)). ATP is bound by residues 79 to 87 (IGEGSYGRV) and Lys-100. Tyr-146 carries the phosphotyrosine modification. The active-site Proton acceptor is the Asp-204. Phosphoserine is present on residues Ser-208 and Ser-238. A phosphothreonine mark is found at Thr-239 and Thr-244. Tyr-252 is subject to Phosphotyrosine.

Belongs to the protein kinase superfamily. Tyr protein kinase family.

In Arabidopsis thaliana (Mouse-ear cress), this protein is Probable protein kinase At2g41970.